A 1272-amino-acid chain; its full sequence is AF4/FMR2 family member 2 (1272 aa).

Disordered stretches follow at residues 151 to 190, 204 to 231, 372 to 401, 422 to 497, 557 to 694, 715 to 743, and 772 to 899; these read SNRKSKSEWPRDSHNTSPAQASQTSSQPNKMQTSTQDPPQ, PQIGTVEKSNPSSKEENNPNSGGEDTFK, TLQKWSDPSSRASTKMLEDDLKLSSDEDDL, KAKP…QLDK, IREK…ETLQ, TLSTLTNGNSNNLSTSNEETAFSPPPAMQ, and PGQN…QDKN. Positions 155-164 are enriched in basic and acidic residues; it reads SKSEWPRDSH. Over residues 165 to 179 the composition is skewed to low complexity; the sequence is NTSPAQASQTSSQPN. Polar residues predominate over residues 180–189; the sequence is KMQTSTQDPP. Residues 210-227 are compositionally biased toward low complexity; sequence EKSNPSSKEENNPNSGGE. Over residues 374 to 384 the composition is skewed to polar residues; sequence QKWSDPSSRAS. Residues 387–396 show a composition bias toward basic and acidic residues; it reads MLEDDLKLSS. The residue at position 395 (S395) is a Phosphoserine. Over residues 436–450 the composition is skewed to polar residues; that stretch reads TPQSTPATQTNVGSG. Phosphothreonine is present on T482. The span at 580–590 shows a compositional bias: polar residues; that stretch reads STSVDTVSQRT. Positions 620-633 are enriched in basic and acidic residues; the sequence is PKEKGSVELPDPPR. The segment covering 634-644 has biased composition (basic residues); that stretch reads SRNKATAHKPV. The span at 715 to 734 shows a compositional bias: low complexity; that stretch reads TLSTLTNGNSNNLSTSNEET. The span at 815–831 shows a compositional bias: basic and acidic residues; sequence PAETAEKIPEKKQRLED. A compositionally biased stretch (pro residues) spans 841-850; the sequence is CISPAPPHKP. Residues 887–899 show a composition bias toward polar residues; that stretch reads VSGNNGHFGQDKN.

This sequence belongs to the AF4 family. As to expression, highly expressed in the hippocampus, the piriform cortex, Purkinje cells and the cingulate gyrus.

Its subcellular location is the nucleus speckle. Functionally, RNA-binding protein. Might be involved in alternative splicing regulation through an interaction with G-quartet RNA structure. The protein is AF4/FMR2 family member 2 of Mus musculus (Mouse).